Consider the following 558-residue polypeptide: Serine palmitoyltransferase 1 (558 aa).

Residues 1–49 (MAHIPEVLPKSIPIPAFIVTTSSYLWYYFNLVLTQIPGGQFIVSYIKKS) lie on the Lumenal side of the membrane. The helical transmembrane segment at 50 to 84 (HHDDPYRTTVEIGLILYGIIYYLSKPQQKKSLQAQ) threads the bilayer. At 85-341 (KPNLSPQEID…GRGLSEHFNM (257 aa)) the chain is on the cytoplasmic side. Threonine 121 bears the Phosphothreonine mark. A helical transmembrane segment spans residues 342–371 (DRATAIDITVGSMATALGSTGGFVLGDSVM). Residues 372–424 (CLHQRIGSNAYCFSACLPAYTVTSVSKVLKLMDSNNDAVQTLQKLSKSLHDSF) are Lumenal-facing. The helical transmembrane segment at 425-457 (ASDDSLRSYVIVTSSPVSAVLHLQLTPAYRSRK) threads the bilayer. The Cytoplasmic segment spans residues 458 to 558 (FGYTCEQLFE…ILACCQESNK (101 aa)).

The protein belongs to the class-II pyridoxal-phosphate-dependent aminotransferase family. As to quaternary structure, LCB1 and LCB2 encode essential subunits of the enzyme and form a heterodimer. Component of the SPOTS complex, at least composed of LCB1/2 (LCB1 and/or LCB2), ORM1/2 (ORM1 and/or ORM2), SAC1 and TSC3. Interacts with LCB2 and TSC3. The cofactor is pyridoxal 5'-phosphate.

It is found in the cytoplasm. The protein localises to the endoplasmic reticulum membrane. It catalyses the reaction L-serine + hexadecanoyl-CoA + H(+) = 3-oxosphinganine + CO2 + CoA. It participates in lipid metabolism; sphingolipid metabolism. Component of serine palmitoyltransferase (SPT), which catalyzes the committed step in the synthesis of sphingolipids, the condensation of serine with palmitoyl CoA to form the long chain base 3-ketosphinganine. The protein is Serine palmitoyltransferase 1 (LCB1) of Saccharomyces cerevisiae (strain ATCC 204508 / S288c) (Baker's yeast).